A 464-amino-acid polypeptide reads, in one-letter code: Argininosuccinate lyase (464 aa).

This sequence belongs to the lyase 1 family. Argininosuccinate lyase subfamily.

It localises to the cytoplasm. The catalysed reaction is 2-(N(omega)-L-arginino)succinate = fumarate + L-arginine. Its pathway is amino-acid biosynthesis; L-arginine biosynthesis; L-arginine from L-ornithine and carbamoyl phosphate: step 3/3. In Pseudomonas syringae pv. tomato (strain ATCC BAA-871 / DC3000), this protein is Argininosuccinate lyase.